Here is a 147-residue protein sequence, read N- to C-terminus: Nucleoside diphosphate kinase (147 aa).

K9, F57, R85, T91, R102, and N112 together coordinate ATP. The Pros-phosphohistidine intermediate role is filled by H115.

It belongs to the NDK family. Homotetramer. Mg(2+) is required as a cofactor.

It is found in the cytoplasm. It catalyses the reaction a 2'-deoxyribonucleoside 5'-diphosphate + ATP = a 2'-deoxyribonucleoside 5'-triphosphate + ADP. The catalysed reaction is a ribonucleoside 5'-diphosphate + ATP = a ribonucleoside 5'-triphosphate + ADP. Its function is as follows. Major role in the synthesis of nucleoside triphosphates other than ATP. The ATP gamma phosphate is transferred to the NDP beta phosphate via a ping-pong mechanism, using a phosphorylated active-site intermediate. This Kosmotoga olearia (strain ATCC BAA-1733 / DSM 21960 / TBF 19.5.1) protein is Nucleoside diphosphate kinase.